The chain runs to 150 residues: Single-stranded DNA-binding protein 1 (150 aa).

The SSB domain maps to 1 to 104 (MINNVVLVGR…VVADTFQMLE (104 aa)). Polar residues predominate over residues 103–120 (LESNKTQGQQTSKPQAQN). The disordered stretch occupies residues 103 to 150 (LESNKTQGQQTSKPQAQNKKPQAPDPFKAPAADPFAGGTEISDDDLPF). Positions 121–138 (KKPQAPDPFKAPAADPFA) are enriched in low complexity. An Important for interaction with partner proteins motif is present at residues 145–150 (DDDLPF).

In terms of assembly, homotetramer.

Its function is as follows. Plays an important role in DNA replication, recombination and repair. Binds to ssDNA and to an array of partner proteins to recruit them to their sites of action during DNA metabolism. This chain is Single-stranded DNA-binding protein 1 (ssb1), found in Lactococcus lactis subsp. lactis (strain IL1403) (Streptococcus lactis).